A 265-amino-acid chain; its full sequence is Histone H1 (265 aa).

Over residues 1–27 the composition is skewed to low complexity; it reads MATEEPIVAVETVPEPIVTEPTTITEP. 3 disordered regions span residues 1–66, 131–226, and 242–265; these read MATE…PTYE, AAKK…TTPG, and VKSVKAKSVKSPVKKVSVKRGGRK. Residues 29-42 show a composition bias toward basic and acidic residues; that stretch reads VPEKEEPKAEVEKT. The segment covering 43-55 has biased composition (basic residues); the sequence is KKAKGSKPKKASK. Positions 61–130 constitute an H15 domain; it reads SHPTYEEMIK…KVKGSFKLSA (70 aa). Residues 140-171 are compositionally biased toward basic residues; that stretch reads PKAKTAAKAKSVKAKPAAKPKAKAVVKPKVAS. The span at 186 to 202 shows a compositional bias: low complexity; sequence KPKTVAAKTKPTAAKPK. The segment covering 203 to 215 has biased composition (basic residues); the sequence is AVVKPKSKVKPAK. A compositionally biased stretch (low complexity) spans 216–226; the sequence is VAKTSVKTTPG.

It belongs to the histone H1/H5 family.

Its subcellular location is the nucleus. The protein localises to the chromosome. Its function is as follows. Histones H1 are necessary for the condensation of nucleosome chains into higher-order structures. The sequence is that of Histone H1 from Pisum sativum (Garden pea).